The chain runs to 408 residues: CinA-like protein (408 aa).

It belongs to the CinA family.

The protein is CinA-like protein of Anaeromyxobacter dehalogenans (strain 2CP-1 / ATCC BAA-258).